Here is a 539-residue protein sequence, read N- to C-terminus: Glucans biosynthesis protein D (539 aa).

A signal peptide (tat-type signal) is located at residues 1–29 (MNRRNLLKASMALAAYGSVSASGLFAARA).

Belongs to the OpgD/OpgG family. Post-translationally, predicted to be exported by the Tat system. The position of the signal peptide cleavage has not been experimentally proven.

It localises to the periplasm. It functions in the pathway glycan metabolism; osmoregulated periplasmic glucan (OPG) biosynthesis. Its function is as follows. Probably involved in the control of the structural glucose backbone of osmoregulated periplasmic glucans (OPGs). In Pseudomonas syringae pv. syringae (strain B728a), this protein is Glucans biosynthesis protein D.